Consider the following 303-residue polypeptide: Bifunctional protein FolD (303 aa).

Residues 175 to 177 and Ile243 contribute to the NADP(+) site; that span reads GVS.

It belongs to the tetrahydrofolate dehydrogenase/cyclohydrolase family. In terms of assembly, homodimer.

The enzyme catalyses (6R)-5,10-methylene-5,6,7,8-tetrahydrofolate + NADP(+) = (6R)-5,10-methenyltetrahydrofolate + NADPH. It carries out the reaction (6R)-5,10-methenyltetrahydrofolate + H2O = (6R)-10-formyltetrahydrofolate + H(+). It participates in one-carbon metabolism; tetrahydrofolate interconversion. In terms of biological role, catalyzes the oxidation of 5,10-methylenetetrahydrofolate to 5,10-methenyltetrahydrofolate and then the hydrolysis of 5,10-methenyltetrahydrofolate to 10-formyltetrahydrofolate. This Xanthomonas axonopodis pv. citri (strain 306) protein is Bifunctional protein FolD.